The primary structure comprises 186 residues: Crossover junction endodeoxyribonuclease RuvC (186 aa).

Active-site residues include aspartate 7, glutamate 73, and aspartate 145. Residues aspartate 7, glutamate 73, and aspartate 145 each coordinate Mg(2+).

The protein belongs to the RuvC family. In terms of assembly, homodimer which binds Holliday junction (HJ) DNA. The HJ becomes 2-fold symmetrical on binding to RuvC with unstacked arms; it has a different conformation from HJ DNA in complex with RuvA. In the full resolvosome a probable DNA-RuvA(4)-RuvB(12)-RuvC(2) complex forms which resolves the HJ. Mg(2+) serves as cofactor.

It is found in the cytoplasm. The catalysed reaction is Endonucleolytic cleavage at a junction such as a reciprocal single-stranded crossover between two homologous DNA duplexes (Holliday junction).. Its function is as follows. The RuvA-RuvB-RuvC complex processes Holliday junction (HJ) DNA during genetic recombination and DNA repair. Endonuclease that resolves HJ intermediates. Cleaves cruciform DNA by making single-stranded nicks across the HJ at symmetrical positions within the homologous arms, yielding a 5'-phosphate and a 3'-hydroxyl group; requires a central core of homology in the junction. The consensus cleavage sequence is 5'-(A/T)TT(C/G)-3'. Cleavage occurs on the 3'-side of the TT dinucleotide at the point of strand exchange. HJ branch migration catalyzed by RuvA-RuvB allows RuvC to scan DNA until it finds its consensus sequence, where it cleaves and resolves the cruciform DNA. The polypeptide is Crossover junction endodeoxyribonuclease RuvC (Acidovorax sp. (strain JS42)).